Consider the following 546-residue polypeptide: Tryptophan biosynthesis protein TrpCD (546 aa).

The indole-3-glycerol phosphate synthase stretch occupies residues 1–226 (MMDFGFVDSL…FVQTVCGGEK (226 aa)). An anthranilate phosphoribosyltransferase region spans residues 227–546 (MIEDVLRGLD…EEIACKSTSM (320 aa)). 5-phospho-alpha-D-ribose 1-diphosphate is bound by residues Gly-295, 298-299 (GD), Ser-303, 305-308 (NVST), 322-330 (KHGNRAVSS), and Ser-334. Residue Gly-295 participates in anthranilate binding. Position 307 (Ser-307) interacts with Mg(2+). Residue Asn-325 coordinates anthranilate. Residue Arg-380 coordinates anthranilate. Mg(2+) is bound by residues Asp-437 and Glu-438.

This sequence in the N-terminal section; belongs to the TrpC family. It in the C-terminal section; belongs to the anthranilate phosphoribosyltransferase family. Mg(2+) is required as a cofactor.

The enzyme catalyses 1-(2-carboxyphenylamino)-1-deoxy-D-ribulose 5-phosphate + H(+) = (1S,2R)-1-C-(indol-3-yl)glycerol 3-phosphate + CO2 + H2O. The catalysed reaction is N-(5-phospho-beta-D-ribosyl)anthranilate + diphosphate = 5-phospho-alpha-D-ribose 1-diphosphate + anthranilate. It participates in amino-acid biosynthesis; L-tryptophan biosynthesis; L-tryptophan from chorismate: step 2/5. The protein operates within amino-acid biosynthesis; L-tryptophan biosynthesis; L-tryptophan from chorismate: step 4/5. Its function is as follows. Bifunctional enzyme that catalyzes the second and fourth steps of tryptophan biosynthetic pathway. The second step is catalyzed by the anthranilate phosphoribosyltransferase, coded by the TrpD domain and the fourth step is catalyzed by indole-3-glycerol phosphate synthase, coded by the TrpC domain. The sequence is that of Tryptophan biosynthesis protein TrpCD (trpCD) from Archaeoglobus fulgidus (strain ATCC 49558 / DSM 4304 / JCM 9628 / NBRC 100126 / VC-16).